Consider the following 537-residue polypeptide: Tyrosine-protein kinase Fyn (537 aa).

G2 carries N-myristoyl glycine lipidation. Residues C3 and C6 are each lipidated (S-palmitoyl cysteine). T12 carries the post-translational modification Phosphothreonine; by PKC. Phosphoserine is present on residues S21 and S26. The SH3 domain occupies T82–S143. Residues W149–C246 enclose the SH2 domain. A Phosphotyrosine modification is found at Y185. A Protein kinase domain is found at L271–F524. Residues L277 to V285 and K299 each bind ATP. D390 functions as the Proton acceptor in the catalytic mechanism. Y420 carries the post-translational modification Phosphotyrosine; by autocatalysis. A Phosphotyrosine; by CSK modification is found at Y531.

Belongs to the protein kinase superfamily. Tyr protein kinase family. SRC subfamily. Interacts (via its SH3 domain) with PIK3R1 and PRMT8. Interacts with FYB1, PAG1, and SH2D1A. Interacts with CD79A (tyrosine-phosphorylated form); the interaction increases FYN activity. Interacts (via SH2 domain) with CSF1R (tyrosine phosphorylated). Interacts with TOM1L1 (phosphorylated form). Interacts with KDR (tyrosine phosphorylated). Interacts (via SH3 domain) with KLHL2 (via N-terminus). Interacts with SH2D1A and SLAMF1. Interacts with ITCH; the interaction phosphorylates ITCH and negatively regulates its activity. Interacts with FASLG. Interacts with RUNX3. Interacts with KIT. Interacts with EPHA8; possible downstream effector of EPHA8 in regulation of cell adhesion. Interacts with PTK2/FAK1; this interaction leads to PTK2/FAK1 phosphorylation and activation. Interacts with CAV1; this interaction couples integrins to the Ras-ERK pathway. Interacts with UNC119. Interacts (via SH2 domain) with PTPRH (phosphorylated form). Interacts with PTPRO (phosphorylated form). Interacts with PTPRB (phosphorylated form). Interacts with FYB2. Interacts with DSCAM. Interacts with SKAP1 and FYB1; this interaction promotes the phosphorylation of CLNK. Interacts with NEDD9; in the presence of PTK2. The cofactor is Mn(2+). Post-translationally, autophosphorylated at Tyr-420. Phosphorylation on the C-terminal tail at Tyr-531 by CSK maintains the enzyme in an inactive state. PTPRC/CD45 dephosphorylates Tyr-531 leading to activation. Ultraviolet B (UVB) strongly increase phosphorylation at Thr-12 and kinase activity, and promotes translocation from the cytoplasm to the nucleus. Dephosphorylation at Tyr-420 by PTPN2 negatively regulates T-cell receptor signaling. Phosphorylated at tyrosine residues, which can be enhanced by NTN1. Palmitoylated. Palmitoylation at Cys-3 and Cys-6, probably by ZDHHC21, regulates subcellular location.

Its subcellular location is the cytoplasm. The protein resides in the nucleus. It is found in the cell membrane. It localises to the perikaryon. The catalysed reaction is L-tyrosyl-[protein] + ATP = O-phospho-L-tyrosyl-[protein] + ADP + H(+). Inhibited by phosphorylation of Tyr-531 by leukocyte common antigen and activated by dephosphorylation of this site. Non-receptor tyrosine-protein kinase that plays a role in many biological processes including regulation of cell growth and survival, cell adhesion, integrin-mediated signaling, cytoskeletal remodeling, cell motility, immune response and axon guidance. Inactive FYN is phosphorylated on its C-terminal tail within the catalytic domain. Following activation by PKA, the protein subsequently associates with PTK2/FAK1, allowing PTK2/FAK1 phosphorylation, activation and targeting to focal adhesions. Involved in the regulation of cell adhesion and motility through phosphorylation of CTNNB1 (beta-catenin) and CTNND1 (delta-catenin). Regulates cytoskeletal remodeling by phosphorylating several proteins including the actin regulator WAS and the microtubule-associated proteins MAP2 and MAPT. Promotes cell survival by phosphorylating AGAP2/PIKE-A and preventing its apoptotic cleavage. Participates in signal transduction pathways that regulate the integrity of the glomerular slit diaphragm (an essential part of the glomerular filter of the kidney) by phosphorylating several slit diaphragm components including NPHS1, KIRREL1 and TRPC6. Plays a role in neural processes by phosphorylating DPYSL2, a multifunctional adapter protein within the central nervous system, ARHGAP32, a regulator for Rho family GTPases implicated in various neural functions, and SNCA, a small pre-synaptic protein. Involved in reelin signaling by mediating phosphorylation of DAB1 following reelin (RELN)-binding to its receptor. Participates in the downstream signaling pathways that lead to T-cell differentiation and proliferation following T-cell receptor (TCR) stimulation. Phosphorylates PTK2B/PYK2 in response to T-cell receptor activation. Also participates in negative feedback regulation of TCR signaling through phosphorylation of PAG1, thereby promoting interaction between PAG1 and CSK and recruitment of CSK to lipid rafts. CSK maintains LCK and FYN in an inactive form. Promotes CD28-induced phosphorylation of VAV1. In mast cells, phosphorylates CLNK after activation of immunoglobulin epsilon receptor signaling. Can also promote CD244-mediated NK cell activation. The protein is Tyrosine-protein kinase Fyn of Sus scrofa (Pig).